A 428-amino-acid chain; its full sequence is Enolase (428 aa).

Residue Gln-163 coordinates (2R)-2-phosphoglycerate. Glu-205 serves as the catalytic Proton donor. Positions 242, 285, and 312 each coordinate Mg(2+). (2R)-2-phosphoglycerate contacts are provided by Lys-337, Arg-366, Ser-367, and Lys-388. Lys-337 (proton acceptor) is an active-site residue.

Belongs to the enolase family. Requires Mg(2+) as cofactor.

The protein resides in the cytoplasm. It is found in the secreted. Its subcellular location is the cell surface. It carries out the reaction (2R)-2-phosphoglycerate = phosphoenolpyruvate + H2O. The protein operates within carbohydrate degradation; glycolysis; pyruvate from D-glyceraldehyde 3-phosphate: step 4/5. In terms of biological role, catalyzes the reversible conversion of 2-phosphoglycerate (2-PG) into phosphoenolpyruvate (PEP). It is essential for the degradation of carbohydrates via glycolysis. The polypeptide is Enolase (Nitrosomonas europaea (strain ATCC 19718 / CIP 103999 / KCTC 2705 / NBRC 14298)).